The sequence spans 313 residues: Porphobilinogen deaminase (313 aa).

Position 241 is an S-(dipyrrolylmethanemethyl)cysteine (Cys241).

Belongs to the HMBS family. Monomer. Dipyrromethane is required as a cofactor.

The enzyme catalyses 4 porphobilinogen + H2O = hydroxymethylbilane + 4 NH4(+). Its pathway is porphyrin-containing compound metabolism; protoporphyrin-IX biosynthesis; coproporphyrinogen-III from 5-aminolevulinate: step 2/4. It functions in the pathway porphyrin-containing compound metabolism; chlorophyll biosynthesis. Functionally, tetrapolymerization of the monopyrrole PBG into the hydroxymethylbilane pre-uroporphyrinogen in several discrete steps. The sequence is that of Porphobilinogen deaminase from Chlorobium phaeobacteroides (strain DSM 266 / SMG 266 / 2430).